A 283-amino-acid polypeptide reads, in one-letter code: 4-hydroxy-tetrahydrodipicolinate synthase (283 aa).

Residue threonine 46 participates in pyruvate binding. Tyrosine 134 acts as the Proton donor/acceptor in catalysis. The active-site Schiff-base intermediate with substrate is the lysine 162. Isoleucine 208 serves as a coordination point for pyruvate.

The protein belongs to the DapA family. In terms of assembly, homotetramer; dimer of dimers.

The protein localises to the cytoplasm. The enzyme catalyses L-aspartate 4-semialdehyde + pyruvate = (2S,4S)-4-hydroxy-2,3,4,5-tetrahydrodipicolinate + H2O + H(+). It participates in amino-acid biosynthesis; L-lysine biosynthesis via DAP pathway; (S)-tetrahydrodipicolinate from L-aspartate: step 3/4. In terms of biological role, catalyzes the condensation of (S)-aspartate-beta-semialdehyde [(S)-ASA] and pyruvate to 4-hydroxy-tetrahydrodipicolinate (HTPA). The polypeptide is 4-hydroxy-tetrahydrodipicolinate synthase (Methanothermobacter thermautotrophicus (strain ATCC 29096 / DSM 1053 / JCM 10044 / NBRC 100330 / Delta H) (Methanobacterium thermoautotrophicum)).